The sequence spans 312 residues: Small ribosomal subunit protein RACK1 (312 aa).

WD repeat units follow at residues 9 to 42 (GHRG…ISWK), 63 to 93 (GHTG…RMWD), 105 to 135 (KHTK…RVWN), 148 to 180 (GHED…KVWN), 192 to 222 (GHSN…LLWD), 233 to 262 (NVES…SVYD), and 279 to 307 (PSEC…RVWS).

Belongs to the WD repeat G protein beta family. Ribosomal protein RACK1 subfamily.

The protein is Small ribosomal subunit protein RACK1 of Leishmania chagasi.